Consider the following 595-residue polypeptide: Elongation factor 4 (595 aa).

In terms of domain architecture, tr-type G spans 2–184 (KNIRNFSIIA…QIVERIPTPK (183 aa)). Residues 14–19 (DHGKST) and 131–134 (NKID) contribute to the GTP site.

This sequence belongs to the TRAFAC class translation factor GTPase superfamily. Classic translation factor GTPase family. LepA subfamily.

Its subcellular location is the cell inner membrane. The enzyme catalyses GTP + H2O = GDP + phosphate + H(+). Required for accurate and efficient protein synthesis under certain stress conditions. May act as a fidelity factor of the translation reaction, by catalyzing a one-codon backward translocation of tRNAs on improperly translocated ribosomes. Back-translocation proceeds from a post-translocation (POST) complex to a pre-translocation (PRE) complex, thus giving elongation factor G a second chance to translocate the tRNAs correctly. Binds to ribosomes in a GTP-dependent manner. In Vesicomyosocius okutanii subsp. Calyptogena okutanii (strain HA), this protein is Elongation factor 4.